The primary structure comprises 285 residues: NAD kinase (285 aa).

The Proton acceptor role is filled by Asp66. NAD(+)-binding positions include 66–67, 137–138, Arg148, Arg165, Asp167, and 178–183; these read DG, ND, and TAYSLS.

It belongs to the NAD kinase family. Requires a divalent metal cation as cofactor.

Its subcellular location is the cytoplasm. The catalysed reaction is NAD(+) + ATP = ADP + NADP(+) + H(+). In terms of biological role, involved in the regulation of the intracellular balance of NAD and NADP, and is a key enzyme in the biosynthesis of NADP. Catalyzes specifically the phosphorylation on 2'-hydroxyl of the adenosine moiety of NAD to yield NADP. In Chlorobium phaeobacteroides (strain BS1), this protein is NAD kinase.